The chain runs to 173 residues: Large ribosomal subunit protein uL29c (173 aa).

The N-terminal 60 residues, methionine 1–methionine 60, are a transit peptide targeting the chloroplast. The disordered stretch occupies residues lysine 143–alanine 173. Phosphoserine is present on serine 172.

It belongs to the universal ribosomal protein uL29 family. In terms of assembly, part of the 50S ribosomal subunit.

It localises to the plastid. The protein localises to the chloroplast. The sequence is that of Large ribosomal subunit protein uL29c (RPL29) from Arabidopsis thaliana (Mouse-ear cress).